The chain runs to 197 residues: Guanylate kinase (197 aa).

One can recognise a Guanylate kinase-like domain in the interval 6–191; it reads SKLIILSGPS…CVAQIEKIIS (186 aa). 13–20 contributes to the ATP binding site; the sequence is GPSGVGKG.

The protein belongs to the guanylate kinase family.

Its subcellular location is the cytoplasm. It catalyses the reaction GMP + ATP = GDP + ADP. Essential for recycling GMP and indirectly, cGMP. The protein is Guanylate kinase of Mesomycoplasma hyopneumoniae (strain 7448) (Mycoplasma hyopneumoniae).